Consider the following 1447-residue polypeptide: MGARASVLSGGELDRWEKIRLRPGGKKKYKLKHIVWASRELERFAVNPGLLETSEGCRQILGQLQPSLQTGSEELRSLYNTVATLYCVHQRIEIKDTKEALDKIEEEQNKSKKKAQQAAADTGHSSQVSQNYPIVQNIQGQMVHQAISPRTLNAWVKVVEEKAFSPEVIPMFSALSEGATPQDLNTMLNTVGGHQAAMQMLKETINEEAAEWDRVHPVHAGPIAPGQMREPRGSDIAGTTSTLQEQIGWMTNNPPIPVGEIYKRWIILGLNKIVRMYSPTSILDIRQGPKEPFRDYVDRFYKTLRAEQASQEVKNWMTETLLVQNANPDCKTILKALGPAATLEEMMTACQGVGGPGHKARVLAEAMSQVTNSATIMMQRGNFRNQRKIVKCFNCGKEGHIARNCRAPRKKGCWKCGKEGHQMKDCTERQANFLREDLAFLQGKAREFSSEQTRANSPTISSEQTRANSPTRRELQVWGRDNNSLSEAGADRQGTVSFNFPQITLWQRPLVTIKIGGQLKEALLDTGADDTVLEEMSLPGRWKPKMIGGIGGFIKVRQYDQILIEICGHKAIGTVLVGPTPVNIIGRNLLTQIGCTLNFPISPIETVPVKLKPGMDGPKVKQWPLTEEKIKALVEICTEMEKEGKISKIGPENPYNTPVFAIKKKDSTKWRKLVDFRELNKRTQDFWEVQLGIPHPAGLKKKKSVTVLDVGDAYFSVPLDEDFRKYTAFTIPSINNETPGIRYQYNVLPQGWKGSPAIFQSSMTKILEPFRKQNPDIVIYQYMDDLYVGSDLEIGQHRTKIEELRQHLLRWGLTTPDKKHQKEPPFLWMGYELHPDKWTVQPIVLPEKDSWTVNDIQKLVGKLNWASQIYPGIKVRQLCKLLRGTKALTEVIPLTEEAELELAENREILKEPVHGVYYDPSKDLIAEIQKQGQGQWTYQIYQEPFKNLKTGKYARTRGAHTNDVKQLTEAVQKITTESIVIWGKTPKFKLPIQKETWETWWTEYWQATWIPEWEFVNTPPLVKLWYQLEKEPIVGAETFYVDGAASRETKLGKAGYVTNRGRQKVVTLTDTTNQKTELQAIHLALQDSGLEVNIVTDSQYALGIIQAQPDKSESELVNQIIEQLIKKEKVYLAWVPAHKGIGGNEQVDKLVSAGIRKVLFLDGIDKAQDEHEKYHSNWRAMASDFNLPPVVAKEIVASCDKCQLKGEAMHGQVDCSPGIWQLDCTHLEGKVILVAVHVASGYIEAEVIPAETGQETAYFLLKLAGRWPVKTIHTDNGSNFTSTTVKAACWWAGIKQEFGIPYNPQSQGVVESMNKELKKIIGQVRDQAEHLKTAVQMAVFIHNFKRKGGIGGYSAGERIVDIIATDIQTKELQKQITKIQNFRVYYRDSRDPLWKGPAKLLWKGEGAVVIQDNSDIKVVPRRKAKIIRDYGKQMAGDDCVASRQDED.

Glycine 2 carries the N-myristoyl glycine; by host lipid modification. The tract at residues 7–31 is interaction with Gp41; sequence VLSGGELDRWEKIRLRPGGKKKYKL. The tract at residues 8–43 is interaction with host CALM1; the sequence is LSGGELDRWEKIRLRPGGKKKYKLKHIVWASRELER. The tract at residues 12–19 is interaction with host AP3D1; it reads ELDRWEKI. The tract at residues 14–33 is interaction with membrane phosphatidylinositol 4,5-bisphosphate and RNA; the sequence is DRWEKIRLRPGGKKKYKLKH. The short motif at 16–22 is the Nuclear export signal element; it reads WEKIRLR. The short motif at 26–32 is the Nuclear localization signal element; the sequence is KKKYKLK. The interval 73-77 is interaction with membrane phosphatidylinositol 4,5-bisphosphate; that stretch reads EELRS. A disordered region spans residues 106–128; it reads EEQNKSKKKAQQAAADTGHSSQV. Tyrosine 132 is modified (phosphotyrosine; by host). The interval 189 to 227 is interaction with human PPIA/CYPA and NUP153; the sequence is NTVGGHQAAMQMLKETINEEAAEWDRVHPVHAGPIAPGQ. A dimerization/Multimerization of capsid protein p24 region spans residues 277–363; that stretch reads YSPTSILDIR…GGPGHKARVL (87 aa). 2 consecutive CCHC-type zinc fingers follow at residues 390-407 and 411-428; these read VKCFNCGKEGHIARNCRA and KGCWKCGKEGHQMKDCTE. The disordered stretch occupies residues 447 to 476; that stretch reads EFSSEQTRANSPTISSEQTRANSPTRRELQ. A compositionally biased stretch (polar residues) spans 450 to 470; the sequence is SEQTRANSPTISSEQTRANSP. Positions 501–505 are dimerization of protease; sequence PQITL. Residues 520–589 enclose the Peptidase A2 domain; it reads KEALLDTGAD…TPVNIIGRNL (70 aa). Aspartate 525 functions as the For protease activity; shared with dimeric partner in the catalytic mechanism. Dimerization of protease stretches follow at residues 549 to 555 and 588 to 600; these read GIGGFIK and NLLTQIGCTLNFP. A Reverse transcriptase domain is found at 643-833; sequence EGKISKIGPE…PPFLWMGYEL (191 aa). Positions 709, 784, and 785 each coordinate Mg(2+). Residues 826–834 form an RT 'primer grip' region; that stretch reads FLWMGYELH. The Tryptophan repeat motif signature appears at 997–1013; the sequence is WETWWTEYWQATWIPEW. Residues 1033–1156 form the RNase H type-1 domain; the sequence is IVGAETFYVD…VDKLVSAGIR (124 aa). 4 residues coordinate Mg(2+): aspartate 1042, glutamate 1077, aspartate 1097, and aspartate 1148. The Integrase-type zinc-finger motif lies at 1162–1203; sequence DGIDKAQDEHEKYHSNWRAMASDFNLPPVVAKEIVASCDKCQ. Zn(2+) is bound by residues histidine 1171, histidine 1175, cysteine 1199, and cysteine 1202. The Integrase catalytic domain occupies 1213–1363; the sequence is VDCSPGIWQL…SAGERIVDII (151 aa). Residues aspartate 1223, aspartate 1275, and glutamate 1311 each coordinate Mg(2+). A DNA-binding region (integrase-type) is located at residues 1382 to 1429; the sequence is FRVYYRDSRDPLWKGPAKLLWKGEGAVVIQDNSDIKVVPRRKAKIIRD.

As to quaternary structure, homotrimer; further assembles as hexamers of trimers. Interacts with gp41 (via C-terminus). Interacts with host CALM1; this interaction induces a conformational change in the Matrix protein, triggering exposure of the myristate group. Interacts with host AP3D1; this interaction allows the polyprotein trafficking to multivesicular bodies during virus assembly. Part of the pre-integration complex (PIC) which is composed of viral genome, matrix protein, Vpr and integrase. Homodimer; the homodimer further multimerizes as homohexamers or homopentamers. Interacts with human PPIA/CYPA; This interaction stabilizes the capsid. Interacts with human NUP153. Interacts with host PDZD8; this interaction stabilizes the capsid. Interacts with monkey TRIM5; this interaction destabilizes the capsid. In terms of assembly, homodimer, whose active site consists of two apposed aspartic acid residues. As to quaternary structure, heterodimer of p66 RT and p51 RT (RT p66/p51). Heterodimerization of RT is essential for DNA polymerase activity. The overall folding of the subdomains is similar in p66 RT and p51 RT but the spatial arrangements of the subdomains are dramatically different. Homotetramer; may further associate as a homohexadecamer. Part of the pre-integration complex (PIC) which is composed of viral genome, matrix protein, Vpr and integrase. Interacts with human SMARCB1/INI1 and human PSIP1/LEDGF isoform 1. Interacts with human KPNA3; this interaction might play a role in nuclear import of the pre-integration complex. Interacts with human NUP153; this interaction might play a role in nuclear import of the pre-integration complex. Mg(2+) serves as cofactor. Specific enzymatic cleavages by the viral protease yield mature proteins. The protease is released by autocatalytic cleavage. The polyprotein is cleaved during and after budding, this process is termed maturation. Proteolytic cleavage of p66 RT removes the RNase H domain to yield the p51 RT subunit. Nucleocapsid protein p7 might be further cleaved after virus entry. Post-translationally, tyrosine phosphorylated presumably in the virion by a host kinase. Phosphorylation is apparently not a major regulator of membrane association. In terms of processing, phosphorylated possibly by host MAPK1; this phosphorylation is necessary for Pin1-mediated virion uncoating. Methylated by host PRMT6, impairing its function by reducing RNA annealing and the initiation of reverse transcription.

The protein resides in the host cell membrane. It localises to the host endosome. It is found in the host multivesicular body. Its subcellular location is the virion membrane. The protein localises to the host nucleus. The protein resides in the host cytoplasm. It localises to the virion. The catalysed reaction is Specific for a P1 residue that is hydrophobic, and P1' variable, but often Pro.. It carries out the reaction Endohydrolysis of RNA in RNA/DNA hybrids. Three different cleavage modes: 1. sequence-specific internal cleavage of RNA. Human immunodeficiency virus type 1 and Moloney murine leukemia virus enzymes prefer to cleave the RNA strand one nucleotide away from the RNA-DNA junction. 2. RNA 5'-end directed cleavage 13-19 nucleotides from the RNA end. 3. DNA 3'-end directed cleavage 15-20 nucleotides away from the primer terminus.. The enzyme catalyses 3'-end directed exonucleolytic cleavage of viral RNA-DNA hybrid.. It catalyses the reaction DNA(n) + a 2'-deoxyribonucleoside 5'-triphosphate = DNA(n+1) + diphosphate. The viral protease is inhibited by many synthetic protease inhibitors (PIs), such as amprenavir, atazanavir, indinavir, loprinavir, nelfinavir, ritonavir and saquinavir. RT can be inhibited either by nucleoside RT inhibitors (NRTIs) or by non nucleoside RT inhibitors (NNRTIs). NRTIs act as chain terminators, whereas NNRTIs inhibit DNA polymerization by binding a small hydrophobic pocket near the RT active site and inducing an allosteric change in this region. Classical NRTIs are abacavir, adefovir (PMEA), didanosine (ddI), lamivudine (3TC), stavudine (d4T), tenofovir (PMPA), zalcitabine (ddC), and zidovudine (AZT). Classical NNRTIs are atevirdine (BHAP U-87201E), delavirdine, efavirenz (DMP-266), emivirine (I-EBU), and nevirapine (BI-RG-587). The tritherapies used as a basic effective treatment of AIDS associate two NRTIs and one NNRTI. Use of protease inhibitors in tritherapy regimens permit more ambitious therapeutic strategies. Its function is as follows. Gag-Pol polyprotein and Gag polyprotein may regulate their own translation, by the binding genomic RNA in the 5'-UTR. At low concentration, Gag-Pol and Gag would promote translation, whereas at high concentration, the polyproteins encapsidate genomic RNA and then shut off translation. Matrix protein p17 targets Gag and Gag-pol polyproteins to the plasma membrane via a multipartite membrane-binding signal, that includes its myristoylated N-terminus. Matrix protein is part of the pre-integration complex. Implicated in the release from host cell mediated by Vpu. Binds to RNA. In terms of biological role, forms the conical core that encapsulates the genomic RNA-nucleocapsid complex in the virion. Most core are conical, with only 7% tubular. The core is constituted by capsid protein hexamer subunits. The core is disassembled soon after virion entry. Host restriction factors such as TRIM5-alpha or TRIMCyp bind retroviral capsids and cause premature capsid disassembly, leading to blocks in reverse transcription. Capsid restriction by TRIM5 is one of the factors which restricts HIV-1 to the human species. Host PIN1 apparently facilitates the virion uncoating. On the other hand, interactions with PDZD8 or CYPA stabilize the capsid. Functionally, nucleocapsid protein p7 encapsulates and protects viral dimeric unspliced genomic RNA (gRNA). Binds these RNAs through its zinc fingers. Acts as a nucleic acid chaperone which is involved in rearangement of nucleic acid secondary structure during gRNA retrotranscription. Also facilitates template switch leading to recombination. As part of the polyprotein, participates in gRNA dimerization, packaging, tRNA incorporation and virion assembly. Its function is as follows. The aspartyl protease mediates proteolytic cleavages of Gag and Gag-Pol polyproteins during or shortly after the release of the virion from the plasma membrane. Cleavages take place as an ordered, step-wise cascade to yield mature proteins. This process is called maturation. Displays maximal activity during the budding process just prior to particle release from the cell. Also cleaves Nef and Vif, probably concomitantly with viral structural proteins on maturation of virus particles. Hydrolyzes host EIF4GI and PABP1 in order to shut off the capped cellular mRNA translation. The resulting inhibition of cellular protein synthesis serves to ensure maximal viral gene expression and to evade host immune response. Also mediates cleavage of host YTHDF3. Mediates cleavage of host CARD8, thereby activating the CARD8 inflammasome, leading to the clearance of latent HIV-1 in patient CD4(+) T-cells after viral reactivation; in contrast, HIV-1 can evade CARD8-sensing when its protease remains inactive in infected cells prior to viral budding. Reverse transcriptase/ribonuclease H (RT) is a multifunctional enzyme that converts the viral RNA genome into dsDNA in the cytoplasm, shortly after virus entry into the cell. This enzyme displays a DNA polymerase activity that can copy either DNA or RNA templates, and a ribonuclease H (RNase H) activity that cleaves the RNA strand of RNA-DNA heteroduplexes in a partially processive 3' to 5' endonucleasic mode. Conversion of viral genomic RNA into dsDNA requires many steps. A tRNA(3)-Lys binds to the primer-binding site (PBS) situated at the 5'-end of the viral RNA. RT uses the 3' end of the tRNA primer to perform a short round of RNA-dependent minus-strand DNA synthesis. The reading proceeds through the U5 region and ends after the repeated (R) region which is present at both ends of viral RNA. The portion of the RNA-DNA heteroduplex is digested by the RNase H, resulting in a ssDNA product attached to the tRNA primer. This ssDNA/tRNA hybridizes with the identical R region situated at the 3' end of viral RNA. This template exchange, known as minus-strand DNA strong stop transfer, can be either intra- or intermolecular. RT uses the 3' end of this newly synthesized short ssDNA to perform the RNA-dependent minus-strand DNA synthesis of the whole template. RNase H digests the RNA template except for two polypurine tracts (PPTs) situated at the 5'-end and near the center of the genome. It is not clear if both polymerase and RNase H activities are simultaneous. RNase H probably can proceed both in a polymerase-dependent (RNA cut into small fragments by the same RT performing DNA synthesis) and a polymerase-independent mode (cleavage of remaining RNA fragments by free RTs). Secondly, RT performs DNA-directed plus-strand DNA synthesis using the PPTs that have not been removed by RNase H as primers. PPTs and tRNA primers are then removed by RNase H. The 3' and 5' ssDNA PBS regions hybridize to form a circular dsDNA intermediate. Strand displacement synthesis by RT to the PBS and PPT ends produces a blunt ended, linear dsDNA copy of the viral genome that includes long terminal repeats (LTRs) at both ends. In terms of biological role, catalyzes viral DNA integration into the host chromosome, by performing a series of DNA cutting and joining reactions. This enzyme activity takes place after virion entry into a cell and reverse transcription of the RNA genome in dsDNA. The first step in the integration process is 3' processing. This step requires a complex comprising the viral genome, matrix protein, Vpr and integrase. This complex is called the pre-integration complex (PIC). The integrase protein removes 2 nucleotides from each 3' end of the viral DNA, leaving recessed CA OH's at the 3' ends. In the second step, the PIC enters cell nucleus. This process is mediated through integrase and Vpr proteins, and allows the virus to infect a non dividing cell. This ability to enter the nucleus is specific of lentiviruses, other retroviruses cannot and rely on cell division to access cell chromosomes. In the third step, termed strand transfer, the integrase protein joins the previously processed 3' ends to the 5' ends of strands of target cellular DNA at the site of integration. The 5'-ends are produced by integrase-catalyzed staggered cuts, 5 bp apart. A Y-shaped, gapped, recombination intermediate results, with the 5'-ends of the viral DNA strands and the 3' ends of target DNA strands remaining unjoined, flanking a gap of 5 bp. The last step is viral DNA integration into host chromosome. This involves host DNA repair synthesis in which the 5 bp gaps between the unjoined strands are filled in and then ligated. Since this process occurs at both cuts flanking the HIV genome, a 5 bp duplication of host DNA is produced at the ends of HIV-1 integration. Alternatively, Integrase may catalyze the excision of viral DNA just after strand transfer, this is termed disintegration. The polypeptide is Gag-Pol polyprotein (gag-pol) (Homo sapiens (Human)).